The following is a 43-amino-acid chain: Protein PsbN (43 aa).

The chain crosses the membrane as a helical span at residues 5 to 27 (ALVAISISRLLVSFTGYALYTAF).

This sequence belongs to the PsbN family.

It localises to the plastid. Its subcellular location is the chloroplast thylakoid membrane. Functionally, may play a role in photosystem I and II biogenesis. The sequence is that of Protein PsbN from Bowenia serrulata (Byfield fern).